The primary structure comprises 34 residues: Photosystem I reaction center subunit XII (34 aa).

A helical transmembrane segment spans residues 10 to 32 (VFVALVVAAHAAVLALRLSISLY).

It belongs to the PsaM family.

It localises to the cellular thylakoid membrane. This chain is Photosystem I reaction center subunit XII, found in Parasynechococcus marenigrum (strain WH8102).